A 440-amino-acid polypeptide reads, in one-letter code: Adenosylhomocysteinase (440 aa).

Residues Thr64, Asp139, and Glu164 each contribute to the substrate site. An NAD(+)-binding site is contributed by 165–167 (TTT). The substrate site is built by Lys194 and Asp198. NAD(+) contacts are provided by residues Asn199, 228–233 (GFGDVG), Glu251, Asn286, 307–309 (IGH), and Asn352.

Belongs to the adenosylhomocysteinase family. The cofactor is NAD(+).

It is found in the cytoplasm. It carries out the reaction S-adenosyl-L-homocysteine + H2O = L-homocysteine + adenosine. The protein operates within amino-acid biosynthesis; L-homocysteine biosynthesis; L-homocysteine from S-adenosyl-L-homocysteine: step 1/1. In terms of biological role, may play a key role in the regulation of the intracellular concentration of adenosylhomocysteine. The protein is Adenosylhomocysteinase of Granulibacter bethesdensis (strain ATCC BAA-1260 / CGDNIH1).